The chain runs to 30 residues: Cyclotide mden-G (30 aa).

Positions 1–30 form a cross-link, cyclopeptide (Gly-Asn); that stretch reads GIPCAESCVYIPCITAALGCSCKNKVCYRN. Disulfide bonds link Cys-4/Cys-20, Cys-8/Cys-22, and Cys-13/Cys-27.

The protein belongs to the cyclotide family. Bracelet subfamily. This is a cyclic peptide.

Functionally, probably participates in a plant defense mechanism. This is Cyclotide mden-G from Melicytus dentatus (Tree violet).